A 206-amino-acid polypeptide reads, in one-letter code: Threonine efflux protein (206 aa).

A helical transmembrane segment spans residues 1–21; sequence MLMLFFTVAMVHIVALMSPGP. Over 22 to 43 the chain is Periplasmic; the sequence is DFFFVSQTAVSRSRKEAMMGVL. A helical transmembrane segment spans residues 44-64; the sequence is GITCGVMVWAGVALLGLHLII. The Cytoplasmic segment spans residues 65–66; that stretch reads EK. Residues 67 to 87 traverse the membrane as a helical segment; the sequence is MAWLHTIIMVGGGLYLCWMGY. At 88 to 149 the chain is on the periplasmic side; the sequence is QMLRGALKKQ…VGDNVGAAAR (62 aa). The helical transmembrane segment at 150 to 173 threads the bilayer; the sequence is WGIFALITLETLAWFTVVASLFAL. The Cytoplasmic portion of the chain corresponds to 174 to 206; it reads PKMRRGYQRLAKWIDGFAGALFAGFGIHLIISR.

It belongs to the Rht family.

It localises to the cell inner membrane. In terms of biological role, conducts the efflux of threonine. The protein is Threonine efflux protein (rhtC) of Salmonella typhi.